Here is a 184-residue protein sequence, read N- to C-terminus: Myeloproliferative leukemia protein (184 aa).

Residues tryptophan 26 to serine 30 carry the WSXWS motif motif. A helical transmembrane segment spans residues isoleucine 44–leucine 64. The Box 1 motif signature appears at leucine 80–histidine 88.

The protein belongs to the type I cytokine receptor family. Type 1 subfamily.

It is found in the membrane. Truncated form of the receptor for thrombopoietin. In Mus musculus (Mouse), this protein is Myeloproliferative leukemia protein (V-MPL).